The chain runs to 82 residues: Small ribosomal subunit protein bS20 (82 aa).

Belongs to the bacterial ribosomal protein bS20 family.

Its function is as follows. Binds directly to 16S ribosomal RNA. The protein is Small ribosomal subunit protein bS20 of Streptococcus pyogenes serotype M12 (strain MGAS2096).